A 503-amino-acid polypeptide reads, in one-letter code: Lysine--tRNA ligase (503 aa).

Residues Glu414 and Glu421 each coordinate Mg(2+).

It belongs to the class-II aminoacyl-tRNA synthetase family. As to quaternary structure, homodimer. It depends on Mg(2+) as a cofactor.

The protein resides in the cytoplasm. It catalyses the reaction tRNA(Lys) + L-lysine + ATP = L-lysyl-tRNA(Lys) + AMP + diphosphate. This Laribacter hongkongensis (strain HLHK9) protein is Lysine--tRNA ligase.